The sequence spans 66 residues: Large ribosomal subunit protein bL35 (66 aa).

The protein belongs to the bacterial ribosomal protein bL35 family.

The chain is Large ribosomal subunit protein bL35 from Parvibaculum lavamentivorans (strain DS-1 / DSM 13023 / NCIMB 13966).